A 1409-amino-acid polypeptide reads, in one-letter code: CRISPR-associated endonuclease Cas9 (1409 aa).

The active-site For RuvC-like nuclease domain is the Asp-31. Mg(2+) is bound by residues Asp-31, Glu-784, and Glu-788. An HNH Cas9-type domain is found at 792-949 (TNQGKSNSQQ…DKAGFIQRQL (158 aa)). Catalysis depends on His-868, which acts as the Proton acceptor for HNH nuclease domain. Mg(2+) is bound at residue His-1011. The span at 1121–1130 (EQNHGLDRGK) shows a compositional bias: basic and acidic residues. Residues 1121–1151 (EQNHGLDRGKPKGLFNANLSSKPKPNSNENL) are disordered. A compositionally biased stretch (polar residues) spans 1137 to 1150 (ANLSSKPKPNSNEN).

This sequence belongs to the CRISPR-associated protein Cas9 family. Subtype II-A subfamily. In terms of assembly, monomer. Binds crRNA and tracrRNA. Mg(2+) is required as a cofactor.

Its activity is regulated as follows. Only has nuclease activity when bound to both gRNAs (crRNA plus tracrRNA). Functionally, CRISPR (clustered regularly interspaced short palindromic repeat) is an adaptive immune system that provides protection against mobile genetic elements (viruses, transposable elements and conjugative plasmids). CRISPR clusters contain spacers, sequences complementary to antecedent mobile elements, and target invading nucleic acids. CRISPR clusters are transcribed and processed into CRISPR RNA (crRNA). In type II CRISPR systems correct processing of pre-crRNA requires a trans-encoded small RNA (tracrRNA), endogenous ribonuclease 3 (rnc) and Cas9. The tracrRNA serves as a guide for ribonuclease 3-aided processing of pre-crRNA. Cas9/crRNA/tracrRNA endonucleolytically cleaves linear or circular dsDNA target complementary to the spacer yielding blunt ends; Cas9 is inactive in the absence of the 2 guide RNAs (gRNA). Cas9 recognizes a 3'-G-rich protospacer adjacent motif (PAM, TGGTG in this organism) in the CRISPR repeat sequences to help distinguish self versus nonself, as targets within the bacterial CRISPR locus do not have PAMs. PAM recognition is also required for catalytic activity. When the CRISPR3/cas system consisting of cas9-cas1-cas2-csn2-CRISPR3 or just cas9-CRISPR3 is expressed in E.coli it prevents plasmids homologous to spacers 1 or 2 from transforming. This chain is CRISPR-associated endonuclease Cas9, found in Streptococcus thermophilus.